The sequence spans 282 residues: Small ribosomal subunit protein uS2 (282 aa).

Residues 260-282 (KRRRSKVYKEEEREVVTNEDESR) form a disordered region. The segment covering 266-282 (VYKEEEREVVTNEDESR) has biased composition (basic and acidic residues).

Belongs to the universal ribosomal protein uS2 family.

This is Small ribosomal subunit protein uS2 from Wolbachia sp. subsp. Drosophila simulans (strain wRi).